A 118-amino-acid chain; its full sequence is Ribulose bisphosphate carboxylase small subunit (118 aa).

It belongs to the RuBisCO small chain family. Heterohexadecamer of 8 large and 8 small subunits.

Its function is as follows. RuBisCO catalyzes two reactions: the carboxylation of D-ribulose 1,5-bisphosphate, the primary event in carbon dioxide fixation, as well as the oxidative fragmentation of the pentose substrate. Both reactions occur simultaneously and in competition at the same active site. Although the small subunit is not catalytic it is essential for maximal activity. In Thiobacillus denitrificans (strain ATCC 25259 / T1), this protein is Ribulose bisphosphate carboxylase small subunit.